Reading from the N-terminus, the 277-residue chain is PTS system sorbose-specific EIIC component (277 aa).

Helical transmembrane passes span 1–21, 92–112, 133–153, 177–197, and 219–239; these read MAIS…VGMG, IQKG…LTVL, FTAI…RVSI, VITG…YAMI, and YLKL…IVYV. Positions 3 to 237 constitute a PTS EIIC type-4 domain; it reads ISTIQIILIF…GAVGLIFAIV (235 aa).

Its subcellular location is the cell membrane. Its function is as follows. The phosphoenolpyruvate-dependent sugar phosphotransferase system (PTS), a major carbohydrate active transport system, catalyzes the phosphorylation of incoming sugar substrates concomitant with their translocation across the cell membrane. The enzyme II SorABCD PTS system is involved in L-sorbose transport. The chain is PTS system sorbose-specific EIIC component from Lacticaseibacillus casei (Lactobacillus casei).